Reading from the N-terminus, the 1128-residue chain is Nck-associated protein 1 (1128 aa).

Ser-2 bears the N-acetylserine mark. The disordered stretch occupies residues 640-665 (AVNKKSKKQTGKKGEPEREKPGVESM). Over residues 651–665 (KKGEPEREKPGVESM) the composition is skewed to basic and acidic residues. Residues 995 to 1015 (IACLLMVFVAVSLPTLASNVM) traverse the membrane as a helical segment.

Belongs to the HEM-1/HEM-2 family. As to quaternary structure, component of the WAVE1 complex composed of ABI2, CYFIP1 or CYFIP2, BRK1, NCKAP1 and WASF1/WAVE1. Within the complex, a heterodimer containing NCKAP1 and CYFIP1 interacts with a heterotrimer formed by WAVE1, ABI2 and BRK1. Component of the WAVE2 complex composed of ABI1, CYFIP1/SRA1, NCKAP1/NAP1 and WASF2/WAVE2. CYFIP2 binds to activated RAC1 which causes the complex to dissociate, releasing activated WASF1. The complex can also be activated by NCK1. Associates preferentially with the first SH3 domain of NCK. Interacts with NYAP1, NYAP2 and MYO16. Interacts with TMEM132D. In terms of tissue distribution, preferentially expressed in brain, heart, liver and testis.

The protein localises to the cell membrane. Its subcellular location is the cell projection. It is found in the lamellipodium membrane. Its function is as follows. Part of the WAVE complex that regulates lamellipodia formation. The WAVE complex regulates actin filament reorganization via its interaction with the Arp2/3 complex. Actin remodeling activity is regulated by RAC1. As component of the WAVE1 complex, required for BDNF-NTRK2 endocytic trafficking and signaling from early endosomes. This Rattus norvegicus (Rat) protein is Nck-associated protein 1 (Nckap1).